The following is a 529-amino-acid chain: Variant surface glycoprotein MITAT 1.6 (529 aa).

An N-terminal signal peptide occupies residues 1–24; it reads MAVHRALAAYAISLYVLLPRKSGA. Disulfide bonds link cysteine 39–cysteine 170 and cysteine 147–cysteine 214. Asparagine 456 is a glycosylation site (N-linked (GlcNAc...) (high mannose) asparagine). The GPI-anchor amidated aspartate moiety is linked to residue aspartate 506. The propeptide at 507–529 is removed in mature form; the sequence is SSILVTKKFALTVVSAAFVALLF.

Post-translationally, N-glycosylated; glycan is composed of 6 to 9 mannose residues.

The protein resides in the cell membrane. Functionally, VSG forms a coat on the surface of the parasite. The trypanosome evades the immune response of the host by expressing a series of antigenically distinct VSGs from an estimated 1000 VSG genes. The sequence is that of Variant surface glycoprotein MITAT 1.6 from Trypanosoma brucei brucei.